The following is a 695-amino-acid chain: Follicle-stimulating hormone receptor (695 aa).

An N-terminal signal peptide occupies residues 1 to 17; it reads MALFLVALLAFLSLGSG. 2 disulfides stabilise this stretch: Cys18-Cys25 and Cys23-Cys32. Positions 18 to 46 constitute an LRRNT domain; it reads CHHRLCHCSNGVFLCQDSKVTEMPSDLPR. At 18 to 366 the chain is on the extracellular side; the sequence is CHHRLCHCSN…EDIMGYDILR (349 aa). LRR repeat units follow at residues 48–70, 71–93, 96–118, 121–142, 143–167, 171–192, 194–216, 219–239, and 240–262; these read AVELRFVLTKLRVIPEGAFSGFG, DLEKIEISQNDVLEVIEANVFSN, KLHEIRIEKANNLLYIDPDAFQN, NLRYLLISNTGIKHLPAVHKIQ, SLQKVLLDIQDNINIHTVERNSFMG, ESMIVWLSKNGIQEIHNCAFNG, QLDELNLSDNSNLEELPNDVFQG, GPVILDISRTRIRSLPSYGLE, and NLKKLRAKSTYHLKKLPSLEKFV. 2 N-linked (GlcNAc...) asparagine glycosylation sites follow: Asn191 and Asn199. Cystine bridges form between Cys275/Cys346, Cys276/Cys292, Cys276/Cys356, and Cys292/Cys338. Residue Asn293 is glycosylated (N-linked (GlcNAc...) asparagine). Tyr335 is subject to Sulfotyrosine. The chain crosses the membrane as a helical span at residues 367 to 387; that stretch reads VLIWFISILAITGNILVLVIL. The Cytoplasmic portion of the chain corresponds to 388-398; the sequence is ITSQYKLTVPR. The chain crosses the membrane as a helical span at residues 399-421; the sequence is FLMCNLAFADLCIGIYLLLIASV. The Extracellular portion of the chain corresponds to 422-443; the sequence is DVHTKSQYHNYAIDWQTGAGCD. Cys442 and Cys517 are disulfide-bonded. The chain crosses the membrane as a helical span at residues 444-465; it reads AAGFFTVFASELSVYTLTAITL. Topologically, residues 466 to 485 are cytoplasmic; sequence ERWHTITHAMQLECKVHVRH. The chain crosses the membrane as a helical span at residues 486–508; that stretch reads AASIMLVGWVFAFAVALFPIFGI. Topologically, residues 509-528 are extracellular; sequence SSYMKVSICLPMDIDSPLSQ. Residues 529–550 traverse the membrane as a helical segment; the sequence is LYVMSLLVLNVLAFVVICGCYT. The Cytoplasmic segment spans residues 551–573; that stretch reads HIYLTVRNPNITSSSSDTKIAKR. A helical transmembrane segment spans residues 574 to 597; sequence MAMLIFTDFLCMAPISFFAISASL. Residues 598–608 lie on the Extracellular side of the membrane; the sequence is KVPLITVSKSK. A helical transmembrane segment spans residues 609-630; sequence ILLVLFYPINSCANPFLYAIFT. The Cytoplasmic segment spans residues 631–695; the sequence is RNFRRDFFIL…LIPLRHLAKN (65 aa).

Belongs to the G-protein coupled receptor 1 family. FSH/LSH/TSH subfamily. As to quaternary structure, homotrimer. Functions as a homotrimer binding the FSH hormone heterodimer composed of CGA and FSHB. Interacts with ARRB2. Interacts with APPL2; interaction is independent of follicle stimulating hormone stimulation. Post-translationally, N-glycosylated; indirectly required for FSH-binding, possibly via a conformational change that allows high affinity binding of hormone. In terms of processing, sulfated. Isoform FSH-R3 is expressed in ovary and testis, but not in kidney (at protein level).

Its subcellular location is the cell membrane. In terms of biological role, g protein-coupled receptor for follitropin, the follicle-stimulating hormone. The activity of isoform FSH-R1 is mediated by G proteins which activate adenylate cyclase. Isoform FSH-R2 and isoform FSH-R3 also bind FSH, but this does not result in activation of adenylate cyclase. Isoform FSH-R3 may be involved in calcium signaling. Through cAMP production activates the downstream PI3K-AKT and ERK1/ERK2 signaling pathways. The chain is Follicle-stimulating hormone receptor (FSHR) from Ovis aries (Sheep).